We begin with the raw amino-acid sequence, 737 residues long: Transcriptional repressor CTCF (737 aa).

N-acetylmethionine is present on Met-1. Residue Lys-18 forms a Glycyl lysine isopeptide (Lys-Gly) (interchain with G-Cter in SUMO2) linkage. Residue Lys-74 forms a Glycyl lysine isopeptide (Lys-Gly) (interchain with G-Cter in SUMO) linkage. The disordered stretch occupies residues 180 to 211 (QGELPPQEDPSWQKDPDYQPPAKKTKKTKKSK). A compositionally biased stretch (basic residues) spans 202-211 (KKTKKTKKSK). A Glycyl lysine isopeptide (Lys-Gly) (interchain with G-Cter in SUMO2) cross-link involves residue Lys-219. The C2H2-type 1 zinc finger occupies 266–288 (FQCELCSYTCPRRSNLDRHMKSH). Thr-289 carries the post-translational modification Phosphothreonine. A C2H2-type 2 zinc finger spans residues 294–316 (HKCHLCGRAFRTVTLLRNHLNTH). Phosphothreonine is present on Thr-317. C2H2-type zinc fingers lie at residues 322–345 (HKCPDCDMAFVTSGELVRHRRYKH) and 351–373 (FKCSMCDYASVEVSKLKRHIRSH). Phosphothreonine is present on Thr-374. The segment at 379–401 (FQCSLCSYASRDTYKLKRHMRTH) adopts a C2H2-type 5 zinc-finger fold. Residue Ser-402 is modified to Phosphoserine. C2H2-type zinc fingers lie at residues 407–430 (YECYICHARFTQSGTMKMHILQKH), 437–460 (FHCPHCDTVIARKSDLGVHLRKQH), 467–489 (KKCRYCDAVFHERYALIQHQKSH), 495–517 (FKCDQCDYACRQERHMIMHKRTH), and 523–546 (YACSHCDKTFRQKQLLDMHFKRYH). Residues 555-577 (FVCSKCGKTFTRRNTMARHADNC) form a C2H2-type 11; atypical zinc finger. Disordered stretches follow at residues 573–687 (HADN…EDQN) and 699–727 (KKEPDAEPAEGEEEEAQAAPADAPNGDLT). Basic residues predominate over residues 593 to 604 (KSKRGRKRKMRS). Ser-609, Ser-610, and Ser-612 each carry phosphoserine. Over residues 610 to 636 (SDSENAEPDLDDNEEEEEPAVEIEPEP) the composition is skewed to acidic residues. The span at 637 to 657 (EPQPQPQPQPQPQPVAPAPPP) shows a compositional bias: pro residues. Over residues 668–687 (RTNQPKQNQPTAIIQVEDQN) the composition is skewed to polar residues. Lys-699 participates in a covalent cross-link: Glycyl lysine isopeptide (Lys-Gly) (interchain with G-Cter in SUMO); alternate. Lys-699 is covalently cross-linked (Glycyl lysine isopeptide (Lys-Gly) (interchain with G-Cter in SUMO2); alternate). Residues 704–714 (AEPAEGEEEEA) are compositionally biased toward acidic residues.

This sequence belongs to the CTCF zinc-finger protein family. In terms of assembly, interacts with CHD8. Interacts with LLPH. Interacts with CENPE. Interacts with BRD2; promoting BRD2 recruitment to chromatin. In terms of processing, sumoylated on Lys-74 and Lys-699; sumoylation of CTCF contributes to the repressive function of CTCF on the MYC P2 promoter.

Its subcellular location is the nucleus. The protein resides in the nucleoplasm. The protein localises to the chromosome. It is found in the centromere. Chromatin binding factor that binds to DNA sequence specific sites and regulates the 3D structure of chromatin. Binds together strands of DNA, thus forming chromatin loops, and anchors DNA to cellular structures, such as the nuclear lamina. Defines the boundaries between active and heterochromatic DNA via binding to chromatin insulators, thereby preventing interaction between promoter and nearby enhancers and silencers. Plays a critical role in the epigenetic regulation. Participates in the allele-specific gene expression at the imprinted IGF2/H19 gene locus. On the maternal allele, binding within the H19 imprinting control region (ICR) mediates maternally inherited higher-order chromatin conformation to restrict enhancer access to IGF2. Mediates interchromosomal association between IGF2/H19 and WSB1/NF1 and may direct distant DNA segments to a common transcription factory. Regulates asynchronous replication of IGF2/H19. Plays a critical role in gene silencing over considerable distances in the genome. Preferentially interacts with unmethylated DNA, preventing spreading of CpG methylation and maintaining methylation-free zones. Inversely, binding to target sites is prevented by CpG methylation. Plays an important role in chromatin remodeling. Can dimerize when it is bound to different DNA sequences, mediating long-range chromatin looping. Causes local loss of histone acetylation and gain of histone methylation in the beta-globin locus, without affecting transcription. When bound to chromatin, it provides an anchor point for nucleosomes positioning. Seems to be essential for homologous X-chromosome pairing. May participate with Tsix in establishing a regulatable epigenetic switch for X chromosome inactivation. May play a role in preventing the propagation of stable methylation at the escape genes from X-inactivation. Involved in sister chromatid cohesion. Associates with both centromeres and chromosomal arms during metaphase and required for cohesin localization to CTCF sites. Plays a role in the recruitment of CENPE to the pericentromeric/centromeric regions of the chromosome during mitosis. Acts as a transcriptional repressor binding to promoters of vertebrate MYC gene and BAG1 gene. Also binds to the PLK and PIM1 promoters. Acts as a transcriptional activator of APP. Regulates APOA1/C3/A4/A5 gene cluster and controls MHC class II gene expression. Plays an essential role in oocyte and preimplantation embryo development by activating or repressing transcription. Seems to act as tumor suppressor. The protein is Transcriptional repressor CTCF (Ctcf) of Rattus norvegicus (Rat).